Consider the following 209-residue polypeptide: Type III pantothenate kinase (209 aa).

Residue 5–12 (DIGNSNAN) coordinates ATP. Substrate-binding positions include tyrosine 68 and 72 to 75 (GIDR). Catalysis depends on aspartate 74, which acts as the Proton acceptor. Aspartate 89 lines the K(+) pocket. Residue serine 92 coordinates ATP. A substrate-binding site is contributed by threonine 144.

This sequence belongs to the type III pantothenate kinase family. Homodimer. It depends on NH4(+) as a cofactor. Requires K(+) as cofactor.

It is found in the cytoplasm. The enzyme catalyses (R)-pantothenate + ATP = (R)-4'-phosphopantothenate + ADP + H(+). It functions in the pathway cofactor biosynthesis; coenzyme A biosynthesis; CoA from (R)-pantothenate: step 1/5. Functionally, catalyzes the phosphorylation of pantothenate (Pan), the first step in CoA biosynthesis. The polypeptide is Type III pantothenate kinase (Campylobacter jejuni (strain RM1221)).